Consider the following 189-residue polypeptide: Ion-translocating oxidoreductase complex subunit B (189 aa).

The tract at residues 1–26 (MSAVMIAVVLLGLLALVFGAILGFAA) is hydrophobic. The 4Fe-4S domain maps to 32–90 (EGDPLVDQVESLLPQTQCGQCGYPGCRPYAEAIAGGDQINKCPPGGTATMEKIAELMGV). Residues Cys-49, Cys-52, Cys-57, Cys-73, Cys-114, Cys-117, Cys-120, Cys-124, Cys-144, Cys-147, Cys-150, and Cys-154 each coordinate [4Fe-4S] cluster. 4Fe-4S ferredoxin-type domains follow at residues 105 to 134 (KVAYIREDECIGCTKCIQACPVDAIVGAGK) and 136 to 164 (MHTVITQDCTGCDLCVEPCPVDCIDMLPV).

It belongs to the 4Fe4S bacterial-type ferredoxin family. RnfB subfamily. In terms of assembly, the complex is composed of six subunits: RnfA, RnfB, RnfC, RnfD, RnfE and RnfG. It depends on [4Fe-4S] cluster as a cofactor.

It is found in the cell inner membrane. Functionally, part of a membrane-bound complex that couples electron transfer with translocation of ions across the membrane. The sequence is that of Ion-translocating oxidoreductase complex subunit B from Shewanella amazonensis (strain ATCC BAA-1098 / SB2B).